The sequence spans 691 residues: DNA ligase (691 aa).

Residues Asp-41–Asp-45, Ser-90–Leu-91, and Glu-130 contribute to the NAD(+) site. Catalysis depends on Lys-132, which acts as the N6-AMP-lysine intermediate. NAD(+) contacts are provided by Arg-153, Glu-190, Lys-307, and Lys-331. Positions 425, 428, 443, and 449 each coordinate Zn(2+). Residues Ala-610–Pro-691 form the BRCT domain.

The protein belongs to the NAD-dependent DNA ligase family. LigA subfamily. Requires Mg(2+) as cofactor. Mn(2+) serves as cofactor.

It catalyses the reaction NAD(+) + (deoxyribonucleotide)n-3'-hydroxyl + 5'-phospho-(deoxyribonucleotide)m = (deoxyribonucleotide)n+m + AMP + beta-nicotinamide D-nucleotide.. Its function is as follows. DNA ligase that catalyzes the formation of phosphodiester linkages between 5'-phosphoryl and 3'-hydroxyl groups in double-stranded DNA using NAD as a coenzyme and as the energy source for the reaction. It is essential for DNA replication and repair of damaged DNA. This Burkholderia ambifaria (strain MC40-6) protein is DNA ligase.